The following is a 257-amino-acid chain: Thiazole synthase (257 aa).

The active-site Schiff-base intermediate with DXP is the Lys-96. 1-deoxy-D-xylulose 5-phosphate-binding positions include Gly-157, Ala-184–Gly-185, and Asn-206–Thr-207.

Belongs to the ThiG family. As to quaternary structure, homotetramer. Forms heterodimers with either ThiH or ThiS.

It is found in the cytoplasm. The enzyme catalyses [ThiS sulfur-carrier protein]-C-terminal-Gly-aminoethanethioate + 2-iminoacetate + 1-deoxy-D-xylulose 5-phosphate = [ThiS sulfur-carrier protein]-C-terminal Gly-Gly + 2-[(2R,5Z)-2-carboxy-4-methylthiazol-5(2H)-ylidene]ethyl phosphate + 2 H2O + H(+). Its pathway is cofactor biosynthesis; thiamine diphosphate biosynthesis. Functionally, catalyzes the rearrangement of 1-deoxy-D-xylulose 5-phosphate (DXP) to produce the thiazole phosphate moiety of thiamine. Sulfur is provided by the thiocarboxylate moiety of the carrier protein ThiS. In vitro, sulfur can be provided by H(2)S. In Rhizobium rhizogenes (strain K84 / ATCC BAA-868) (Agrobacterium radiobacter), this protein is Thiazole synthase.